The primary structure comprises 280 residues: MKLCHFEAGLEHPIFLISGPCVIESEQLALDTAGQLKELCERVGVPFIYKSSFDKANRSSTRSFRGLGLEEGLRILETVKQQIGVPVLTDVHEDTPLEEVAAVVDVLQTPAFLCRQTNFIQNVARQGRPVNIKKGQFLAPWDMGNVVDKAREAGNDQIMVCERGVSFGYNTLVSDMRGLAVMRETGCPVVFDATHSVQQPGGKGTSSGGQREFVPVLARAAVASGVAGLFMETHPDPDKALSDGPNAWPLPLMEELLVTLKTLDDVVKAQGFIESRFLNT.

It belongs to the KdsA family.

Its subcellular location is the cytoplasm. The catalysed reaction is D-arabinose 5-phosphate + phosphoenolpyruvate + H2O = 3-deoxy-alpha-D-manno-2-octulosonate-8-phosphate + phosphate. The protein operates within carbohydrate biosynthesis; 3-deoxy-D-manno-octulosonate biosynthesis; 3-deoxy-D-manno-octulosonate from D-ribulose 5-phosphate: step 2/3. It functions in the pathway bacterial outer membrane biogenesis; lipopolysaccharide biosynthesis. This is 2-dehydro-3-deoxyphosphooctonate aldolase from Thioalkalivibrio sulfidiphilus (strain HL-EbGR7).